Consider the following 305-residue polypeptide: Superkiller complex protein 8 (305 aa).

WD repeat units lie at residues 14–57 (AHED…LEMQ), 62–101 (GHQL…QIRS), 104–143 (AGPV…KEYS), 146–187 (TRGK…HTLE), 188–227 (GHAM…LAAT), 230–269 (GHGS…CVHT), and 272–305 (DHQD…DCPI).

Belongs to the SKI8 family. In terms of assembly, component of the PAF1 complex. Component of the SKI complex.

The protein localises to the nucleus. Its subcellular location is the cytoplasm. Functionally, component of the PAF1 complex (PAF1C) which has multiple functions during transcription by RNA polymerase II and is implicated in regulation of development and maintenance of embryonic stem cell pluripotency. PAF1C associates with RNA polymerase II through interaction with POLR2A CTD non-phosphorylated and 'Ser-2'- and 'Ser-5'-phosphorylated forms and is involved in transcriptional elongation, acting both independently and synergistically with TCEA1 and in cooperation with the DSIF complex and HTATSF1. Also acts as a component of the SKI complex, a multiprotein complex that assists the RNA-degrading exosome during the mRNA decay and quality-control pathways. The SKI complex catalyzes mRNA extraction from 80S ribosomal complexes in the 3'-5' direction and channels mRNA to the cytosolic exosome for degradation. The polypeptide is Superkiller complex protein 8 (skic8) (Xenopus laevis (African clawed frog)).